We begin with the raw amino-acid sequence, 510 residues long: Ankyrin repeat domain-containing protein 13C-A (510 aa).

Residues 1–19 are compositionally biased toward basic and acidic residues; sequence MTGEKIRSLHKDQKPSKDE. The segment at 1 to 35 is disordered; sequence MTGEKIRSLHKDQKPSKDEDLLEPDEEATAGGTFT. 3 ANK repeats span residues 80–111, 112–141, and 145–174; these read DVYF…QKDS, HGNT…PVKV, and QGWS…QQSR.

It localises to the endoplasmic reticulum membrane. Acts as a molecular chaperone for G protein-coupled receptors, regulating their biogenesis and exit from the ER. The chain is Ankyrin repeat domain-containing protein 13C-A (ankrd13c-a) from Xenopus laevis (African clawed frog).